Reading from the N-terminus, the 160-residue chain is MAGVLRSVFQRPPGRLQTVKKGAESLIGTEWIRHKFTRSRIPDKVFQPRPEDHEKYGGDPQNPHKLHIVTRIRSTKRRPYWEKDTIKMLGLQKAHSPQIHKNIPSVNAKLKVVKHLIRIQPLKLPQGLPTEETMSSTCLKSTGELVVQWHLKPVEQEAKS.

The N-terminal 34 residues, 1–34 (MAGVLRSVFQRPPGRLQTVKKGAESLIGTEWIRH), are a transit peptide targeting the mitochondrion. The interval 45-64 (VFQPRPEDHEKYGGDPQNPH) is disordered.

Belongs to the universal ribosomal protein uL30 family. As to quaternary structure, component of the mitochondrial ribosome large subunit (39S) which comprises a 16S rRNA and about 50 distinct proteins.

Its subcellular location is the mitochondrion. The sequence is that of Large ribosomal subunit protein uL30m (Mrpl30) from Rattus norvegicus (Rat).